The chain runs to 678 residues: DNA mismatch repair protein MutL (678 aa).

The protein belongs to the DNA mismatch repair MutL/HexB family.

In terms of biological role, this protein is involved in the repair of mismatches in DNA. It is required for dam-dependent methyl-directed DNA mismatch repair. May act as a 'molecular matchmaker', a protein that promotes the formation of a stable complex between two or more DNA-binding proteins in an ATP-dependent manner without itself being part of a final effector complex. The sequence is that of DNA mismatch repair protein MutL from Lactiplantibacillus plantarum (strain ATCC BAA-793 / NCIMB 8826 / WCFS1) (Lactobacillus plantarum).